The primary structure comprises 229 residues: DNA repair protein RecO (229 aa).

Belongs to the RecO family.

Its function is as follows. Involved in DNA repair and RecF pathway recombination. The sequence is that of DNA repair protein RecO from Pseudomonas fluorescens (strain ATCC BAA-477 / NRRL B-23932 / Pf-5).